The sequence spans 425 residues: Imidazolonepropionase (425 aa).

Residues H82 and H84 each contribute to the Fe(3+) site. H82 and H84 together coordinate Zn(2+). 4-imidazolone-5-propanoate is bound by residues R91, Y154, and H187. Position 154 (Y154) interacts with N-formimidoyl-L-glutamate. H253 contributes to the Fe(3+) binding site. H253 is a Zn(2+) binding site. 4-imidazolone-5-propanoate is bound at residue E256. D328 provides a ligand contact to Fe(3+). Residue D328 participates in Zn(2+) binding. The N-formimidoyl-L-glutamate site is built by N330 and G332. Position 333 (S333) interacts with 4-imidazolone-5-propanoate.

It belongs to the metallo-dependent hydrolases superfamily. HutI family. Zn(2+) is required as a cofactor. It depends on Fe(3+) as a cofactor.

Its subcellular location is the cytoplasm. It carries out the reaction 4-imidazolone-5-propanoate + H2O = N-formimidoyl-L-glutamate. It participates in amino-acid degradation; L-histidine degradation into L-glutamate; N-formimidoyl-L-glutamate from L-histidine: step 3/3. Catalyzes the hydrolytic cleavage of the carbon-nitrogen bond in imidazolone-5-propanoate to yield N-formimidoyl-L-glutamate. It is the third step in the universal histidine degradation pathway. This chain is Imidazolonepropionase, found in Symbiobacterium thermophilum (strain DSM 24528 / JCM 14929 / IAM 14863 / T).